Consider the following 520-residue polypeptide: GMP synthase [glutamine-hydrolyzing] (520 aa).

Residues 9 to 202 (SVLIVDFGSQ…IHNIAGIKGD (194 aa)) enclose the Glutamine amidotransferase type-1 domain. C86 (nucleophile) is an active-site residue. Active-site residues include H176 and E178. In terms of domain architecture, GMPS ATP-PPase spans 203–395 (WSMSAYRQKA…LGLPDSFIGR (193 aa)). Residue 230–236 (SGGVDSS) participates in ATP binding.

As to quaternary structure, homodimer.

It catalyses the reaction XMP + L-glutamine + ATP + H2O = GMP + L-glutamate + AMP + diphosphate + 2 H(+). It functions in the pathway purine metabolism; GMP biosynthesis; GMP from XMP (L-Gln route): step 1/1. Functionally, catalyzes the synthesis of GMP from XMP. The sequence is that of GMP synthase [glutamine-hydrolyzing] from Rhizobium etli (strain CIAT 652).